The primary structure comprises 66 residues: Beta-mammal toxin Cv1 (66 aa).

The LCN-type CS-alpha/beta domain maps to Lys-1–Asn-66. 4 disulfide bridges follow: Cys-12/Cys-65, Cys-16/Cys-41, Cys-25/Cys-46, and Cys-29/Cys-48.

In terms of tissue distribution, expressed by the venom gland.

The protein resides in the secreted. Is susceptible to be neutralized by human antibodies scFvs 10FG2 and HV. Beta toxins bind voltage-independently at site-4 of sodium channels (Nav) and reduces peak current and shifts the voltage of activation toward more negative potentials thereby affecting sodium channel activation and promoting spontaneous and repetitive firing. This toxin is slightly toxic to mice. The polypeptide is Beta-mammal toxin Cv1 (Centruroides villegasi (Scorpion)).